Reading from the N-terminus, the 1345-residue chain is MSTAVETGSSPAKSNSNNSSSGGNNNNGNGNLSPNAKGVQRRQLRERKQRKLYLEEWSLGDEDGEGTRGFSVAEKLESSKFAQAGMVREMRGCDLTVAFLQQHGFNIPLLFRDKAGLGLRMPDPQEFTVNDVRLCVGSRRLLDVMDVNTQKNLQMTMKEWQQYYDSPQKDRLLNVISLEFSHTRLDRFVQSPEIVRQIDWVDVVWPKQLKDAQREGTNLLGGMMYPKVQKYCLMSVKNCYTDFHIDFGGTSVWYHILRGSKVFWLIPPTDRNLQLYEKWVLSGKQADIFFGDTVEKCARVYLTAGNTFFIPTGWIHAVYTPTQSLVFGGNFLHSFGIVKQLKTASVEDSTKVPQKFRYPFFTEMLWYVLARYVHTLLGHSHLEGEASLSEDEMAARPHTHLTHHELFGLKEIVMYLYDLPPQKKNVPSLVLDPVALIKDVRSLVERHCKDQQDLAITGVSVLKSPPGSQPPFLLYDRTRVKQEIKQEIARKNAEVIREQQQLEAGRAREAESDTSQSTGVGSVIGMGAGVEYSNGVMKKEQLENGSGVTVGGHGSQPEATFALPTDTLKYRPPKKMHLATALVAAAASSSSGGGGPVAGVGGSAVVGSSHSPTGGGVGPVTGAGGAISVIATSSSYIEGGQVGGILNMDNCHSPEGGGAKLSPNLTGTGQPRRRRTRCKNCAACQRSDCGTCPFCMDMVKFGGPGRAKQTCMMRQCLSPMLPVTAQCVYCHLDGWRQTPVSPQTKQLASADGPSALMECSVCYEIAHPDCALSQLDGTEDAADAKGIVNEDLPNSWECPSCCRSGKNYDYKPRHFRARQKSSEVRRVSVSHGQGGAEGHADGNTLLPPPVGQYNDFVFTSESEMESGTVSGHMTHWKHGMKRHHQLEVKTERNNSCDTPSPGISPNAIGGDSKVGKRRKSDDGTSVSSSMHESNDAPCGSSAEGAGGAGNANVSTNQWSGSGGGGGSRKKNSIRSQLAQQMLNSSTRVLKKPQYVVRPASGTGSSSSSGNGGSASATNGISNGSNQSGANSCGAGNGERGTNNGGLSGSNGLGNQHYSSSQNLALDPTVLKIIFRYLPQDTLVTCCSVCKVWSNAAVDPDLWKKMNCSEHKMSASLLTAIVRRQPEHLILDWTQIAKRQLAWLVARLPALKNLSLQNCPIQAVLALHTCLCPPLQTLDLSFVRGLNDAAIRDILSPPKDSRPGLSDSKTRLRDLKVMKLAGTDISDVAVRYITQSLPYLRHLDLSSCQRITDAGVAQIGTSTTATARLTELNLSACRLVSENALEHLAKCEGLIWLDLRHVPQVSTQSVIRFASNSKHDLCVRDIKLVERRRRNSTTANRSWHHD.

The tract at residues 1-44 (MSTAVETGSSPAKSNSNNSSSGGNNNNGNGNLSPNAKGVQRRQL) is disordered. Residues 8 to 37 (GSSPAKSNSNNSSSGGNNNNGNGNLSPNAK) show a composition bias toward low complexity. The residue at position 53 (Y53) is a Phosphotyrosine. A phosphoserine mark is found at S58 and S79. One can recognise a JmjC domain in the interval 180–348 (FSHTRLDRFV…KQLKTASVED (169 aa)). Substrate is bound at residue T241. 2 residues coordinate Fe cation: H244 and D246. Position 261 (K261) interacts with substrate. H316 is a Fe cation binding site. Residues 503–522 (EAGRAREAESDTSQSTGVGS) are disordered. The segment at 671 to 717 (PRRRRTRCKNCAACQRSDCGTCPFCMDMVKFGGPGRAKQTCMMRQCL) adopts a CXXC-type zinc-finger fold. Residues C678, C681, C684, C689, C692, C695, C711, and C716 each contribute to the Zn(2+) site. Disordered stretches follow at residues 816–848 (RARQ…LLPP) and 876–1053 (WKHG…NGLG). Over residues 885 to 894 (QLEVKTERNN) the composition is skewed to basic and acidic residues. The segment covering 973-987 (IRSQLAQQMLNSSTR) has biased composition (polar residues). The segment covering 999 to 1025 (ASGTGSSSSSGNGGSASATNGISNGSN) has biased composition (low complexity). The span at 1034-1051 (AGNGERGTNNGGLSGSNG) shows a compositional bias: gly residues. The F-box domain occupies 1059–1105 (SSQNLALDPTVLKIIFRYLPQDTLVTCCSVCKVWSNAAVDPDLWKKM).

Belongs to the JHDM1 histone demethylase family. It depends on Fe(2+) as a cofactor.

The protein resides in the nucleus. It carries out the reaction N(6),N(6)-dimethyl-L-lysyl(36)-[histone H3] + 2 2-oxoglutarate + 2 O2 = L-lysyl(36)-[histone H3] + 2 formaldehyde + 2 succinate + 2 CO2. Histone demethylase that specifically demethylates 'Lys-36' of histone H3, thereby playing a central role in histone code. The polypeptide is JmjC domain-containing histone demethylation protein 1 (Kdm2) (Drosophila melanogaster (Fruit fly)).